The following is a 326-amino-acid chain: GTPase Obg (326 aa).

The 159-residue stretch at 1-159 (MKFVDSAKIY…LEIELELKLM (159 aa)) folds into the Obg domain. The interval 119-138 (EGGKGGKGNPHFASSTRQAP) is disordered. The OBG-type G domain maps to 160-323 (ADVGLVGFPN…LKDELWSRVK (164 aa)). GTP contacts are provided by residues 166 to 173 (GFPNAGKS), 191 to 195 (FTTLV), 213 to 216 (DIPG), 280 to 283 (TKMD), and 304 to 306 (SSV). S173 and T193 together coordinate Mg(2+).

This sequence belongs to the TRAFAC class OBG-HflX-like GTPase superfamily. OBG GTPase family. In terms of assembly, monomer. Requires Mg(2+) as cofactor.

It localises to the cytoplasm. An essential GTPase which binds GTP, GDP and possibly (p)ppGpp with moderate affinity, with high nucleotide exchange rates and a fairly low GTP hydrolysis rate. Plays a role in control of the cell cycle, stress response, ribosome biogenesis and in those bacteria that undergo differentiation, in morphogenesis control. The protein is GTPase Obg of Chlorobium phaeobacteroides (strain BS1).